The sequence spans 147 residues: 3-dehydroquinate dehydratase (147 aa).

Catalysis depends on tyrosine 23, which acts as the Proton acceptor. Residues asparagine 74, histidine 80, and aspartate 87 each coordinate substrate. The active-site Proton donor is histidine 100. Substrate is bound by residues 101 to 102 and arginine 111; that span reads IS.

Belongs to the type-II 3-dehydroquinase family. In terms of assembly, homododecamer.

It catalyses the reaction 3-dehydroquinate = 3-dehydroshikimate + H2O. It functions in the pathway metabolic intermediate biosynthesis; chorismate biosynthesis; chorismate from D-erythrose 4-phosphate and phosphoenolpyruvate: step 3/7. Its function is as follows. Catalyzes a trans-dehydration via an enolate intermediate. This Prochlorococcus marinus (strain MIT 9301) protein is 3-dehydroquinate dehydratase.